The sequence spans 44 residues: Photosystem I reaction center subunit IX (44 aa).

A helical membrane pass occupies residues 7-27; that stretch reads YLSVAPVLTTLWFGSLAGLLI.

It belongs to the PsaJ family.

The protein resides in the plastid. It is found in the chloroplast thylakoid membrane. May help in the organization of the PsaE and PsaF subunits. The polypeptide is Photosystem I reaction center subunit IX (Nymphaea alba (White water-lily)).